We begin with the raw amino-acid sequence, 160 residues long: Methyl-coenzyme M reductase operon protein D (160 aa).

As to quaternary structure, MCR is composed of three subunits: alpha, beta, and gamma. The function of proteins C and D is not known.

This chain is Methyl-coenzyme M reductase operon protein D (mcrD), found in Methanococcus vannielii.